The primary structure comprises 389 residues: Nicotinate phosphoribosyltransferase (389 aa).

H211 is subject to Phosphohistidine; by autocatalysis.

The protein belongs to the NAPRTase family. In terms of processing, transiently phosphorylated on a His residue during the reaction cycle. Phosphorylation strongly increases the affinity for substrates and increases the rate of nicotinate D-ribonucleotide production. Dephosphorylation regenerates the low-affinity form of the enzyme, leading to product release.

It carries out the reaction nicotinate + 5-phospho-alpha-D-ribose 1-diphosphate + ATP + H2O = nicotinate beta-D-ribonucleotide + ADP + phosphate + diphosphate. The protein operates within cofactor biosynthesis; NAD(+) biosynthesis; nicotinate D-ribonucleotide from nicotinate: step 1/1. Catalyzes the synthesis of beta-nicotinate D-ribonucleotide from nicotinate and 5-phospho-D-ribose 1-phosphate at the expense of ATP. This is Nicotinate phosphoribosyltransferase from Desulforapulum autotrophicum (strain ATCC 43914 / DSM 3382 / VKM B-1955 / HRM2) (Desulfobacterium autotrophicum).